Here is a 290-residue protein sequence, read N- to C-terminus: uncharacterized protein (290 aa).

One can recognise an ABC transporter domain in the interval 2–238 (LKTENLSVGY…EIVNELYDLK (237 aa)). 34-41 (GPNGAGKS) serves as a coordination point for ATP.

This sequence belongs to the ABC transporter superfamily.

This is an uncharacterized protein from Methanocaldococcus jannaschii (strain ATCC 43067 / DSM 2661 / JAL-1 / JCM 10045 / NBRC 100440) (Methanococcus jannaschii).